The chain runs to 502 residues: Glycerol kinase (502 aa).

Thr14 provides a ligand contact to ADP. 2 residues coordinate ATP: Thr14 and Thr15. Thr14 is a sn-glycerol 3-phosphate binding site. Arg18 is an ADP binding site. Sn-glycerol 3-phosphate is bound by residues Arg84, Glu85, Tyr136, and Asp245. 5 residues coordinate glycerol: Arg84, Glu85, Tyr136, Asp245, and Gln246. ADP contacts are provided by Thr267 and Gly314. Residues Thr267, Gly314, Gln318, and Gly415 each contribute to the ATP site. The ADP site is built by Gly415 and Asn419.

It belongs to the FGGY kinase family.

The catalysed reaction is glycerol + ATP = sn-glycerol 3-phosphate + ADP + H(+). It participates in polyol metabolism; glycerol degradation via glycerol kinase pathway; sn-glycerol 3-phosphate from glycerol: step 1/1. Inhibited by fructose 1,6-bisphosphate (FBP). Key enzyme in the regulation of glycerol uptake and metabolism. Catalyzes the phosphorylation of glycerol to yield sn-glycerol 3-phosphate. This is Glycerol kinase from Acaryochloris marina (strain MBIC 11017).